Consider the following 371-residue polypeptide: Serpentine receptor class delta-1 (371 aa).

7 helical membrane passes run 31-51 (LSEV…YVIF), 62-82 (AVLL…SLLA), 109-129 (CFFC…ILLI), 148-168 (MIVI…FYFW), 209-229 (IPSL…YFII), 267-287 (AIPI…FGII), and 295-315 (ITFR…FIFI). The disordered stretch occupies residues 344–371 (EKFNQPPKQPTNPAQQSANNDAAKTEKV). Polar residues predominate over residues 354–365 (TNPAQQSANNDA).

The protein belongs to the nematode receptor-like protein srd family.

Its subcellular location is the membrane. This Caenorhabditis elegans protein is Serpentine receptor class delta-1 (srd-1).